Consider the following 1088-residue polypeptide: DNA damage-binding protein 1a (1088 aa).

It belongs to the DDB1 family. Component of the CDD complex, at least composed of COP10, DET1 and DDB1A. Component of the CUL4-RBX1-CDD complex. Component of the CUL4-RBX1-DDB1-PRL1 E3 ubiquitin-protein ligase complex. Component of the UV-DDB complex, which is composed of DDB1A and DDB2. Interacts with RAE1. Interacts with WDR55. Interacts with ATCSA-1. Interacts with DDA1. Binds to ASG2; the subcellular localization of this complex depends on ASG2 farnesylation status. Binds to KTN80.2/DWA3. Interacts with HTD1. Interacts directly with DHU1.

The protein resides in the cytoplasm. The protein localises to the nucleus. It functions in the pathway protein modification; protein ubiquitination. Functionally, component of light signal transduction machinery. Involved in repression of photomorphogenesis in darkness by participating in the CDD complex, a complex probably required to regulate the activity of ubiquitin conjugating enzymes (E2s). Repression of photomorphogenesis is probably mediated by ubiquitination and subsequent degradation of photomorphogenesis-promoting factors such as HY5, HYH and LAF1. Plays a role in DNA repair by forming with DDB2 the UV-damaged DNA-binding protein complex (UV-DDB). Component of the CUL4-RBX1-DDB1-PRL1 E3 ubiquitin-protein ligase complex. The polypeptide is DNA damage-binding protein 1a (Arabidopsis thaliana (Mouse-ear cress)).